Reading from the N-terminus, the 198-residue chain is MAKVLVIKTSMMGANSISNVLNDKFMEYYKEKNPNDEFIYMNLNDEKMASITMTSHNMKEYFVAEYSDKYINQLKKVDKVVMSVPMTNFNVNAVTKNYLDHISVADKTFSYKYSKKGEAIGLLDHLSVQILTTQGAPLGWYPWGNHSEYLKGHWRFLGAKVADHILVDSVKIGENSKKTPQEIIEKFDGEIKKAAYSF.

Residues Ser10 and 16 to 18 (SIS) contribute to the FMN site.

This sequence belongs to the azoreductase type 1 family. Homodimer. Requires FMN as cofactor.

It carries out the reaction 2 a quinone + NADH + H(+) = 2 a 1,4-benzosemiquinone + NAD(+). The enzyme catalyses N,N-dimethyl-1,4-phenylenediamine + anthranilate + 2 NAD(+) = 2-(4-dimethylaminophenyl)diazenylbenzoate + 2 NADH + 2 H(+). Quinone reductase that provides resistance to thiol-specific stress caused by electrophilic quinones. Its function is as follows. Also exhibits azoreductase activity. Catalyzes the reductive cleavage of the azo bond in aromatic azo compounds to the corresponding amines. The sequence is that of FMN-dependent NADH:quinone oxidoreductase from Mycoplasmopsis pulmonis (strain UAB CTIP) (Mycoplasma pulmonis).